The primary structure comprises 127 residues: Large ribosomal subunit protein uL24 (127 aa).

It belongs to the universal ribosomal protein uL24 family. As to quaternary structure, component of the large ribosomal subunit. Mature ribosomes consist of a small (40S) and a large (60S) subunit. The 40S subunit contains about 32 different proteins and 1 molecule of RNA (18S). The 60S subunit contains 45 different proteins and 3 molecules of RNA (25S, 5.8S and 5S).

It is found in the cytoplasm. Functionally, component of the ribosome, a large ribonucleoprotein complex responsible for the synthesis of proteins in the cell. The small ribosomal subunit (SSU) binds messenger RNAs (mRNAs) and translates the encoded message by selecting cognate aminoacyl-transfer RNA (tRNA) molecules. The large subunit (LSU) contains the ribosomal catalytic site termed the peptidyl transferase center (PTC), which catalyzes the formation of peptide bonds, thereby polymerizing the amino acids delivered by tRNAs into a polypeptide chain. The nascent polypeptides leave the ribosome through a tunnel in the LSU and interact with protein factors that function in enzymatic processing, targeting, and the membrane insertion of nascent chains at the exit of the ribosomal tunnel. This is Large ribosomal subunit protein uL24 from Candida albicans (strain SC5314 / ATCC MYA-2876) (Yeast).